We begin with the raw amino-acid sequence, 504 residues long: Ent-kaurene oxidase-like 3 (504 aa).

The helical transmembrane segment at 3–23 threads the bilayer; the sequence is SLLAAGAGGIGVAAAAVGGFI. Cys448 contributes to the heme binding site.

Belongs to the cytochrome P450 family. Heme is required as a cofactor. Expressed in leaf blades.

The protein localises to the membrane. May hydroxylate diterpenes. The sequence is that of Ent-kaurene oxidase-like 3 from Oryza sativa subsp. japonica (Rice).